Here is a 324-residue protein sequence, read N- to C-terminus: Muscleblind-like protein (324 aa).

2 consecutive C3H1-type zinc fingers follow at residues 38–66 (WLQV…HPPP) and 72–100 (QGRV…HPPQ).

Belongs to the muscleblind family. As to expression, expressed in neurons around the pharynx.

Its subcellular location is the nucleus. Binds to RNA with repeat sequences 5'-CUG-3' and 5'-CCUG-3'. This Caenorhabditis elegans protein is Muscleblind-like protein (mbl-1).